Consider the following 1037-residue polypeptide: Signal-induced proliferation-associated protein 1 (1037 aa).

The disordered stretch occupies residues 1 to 85; it reads MWAGGVGSPR…ASRPAATPTR (85 aa). The residue at position 62 (threonine 62) is a Phosphothreonine. Phosphoserine is present on residues serine 65, serine 178, serine 299, and serine 309. The Rap-GAP domain maps to 316 to 534; the sequence is LLTLDEQVLS…RTRQQYLQDL (219 aa). Positions 682 to 758 constitute a PDZ domain; the sequence is ELALPRDGQG…VCVTVLPPDE (77 aa). 2 positions are modified to phosphoserine: serine 812 and serine 834. Disordered regions lie at residues 830 to 849 and 855 to 898; these read HNSL…LPNT and LVTT…ASIL. Residues 871-881 show a composition bias toward low complexity; it reads PPSQDQSGSPS. A Phosphoserine modification is found at serine 907. Positions 943–969 are disordered; sequence REGQPISESGDPKEALKCDSEPEPGSL. Positions 952 to 962 are enriched in basic and acidic residues; the sequence is GDPKEALKCDS. A coiled-coil region spans residues 968-1025; that stretch reads SLSEKVSHLESMLWKLQEDLQREKADRAALEEEVRSLRHNNQRLLAESESAATRLLLA.

As to quaternary structure, interacts with RRP1B; the interaction leads to inhibition of SIPA1 GTPase activity. Preferentially expressed in both fetal and adult lymphohematopoietic tissues.

The protein localises to the nucleus. The protein resides in the cytoplasm. It is found in the perinuclear region. Its subcellular location is the endomembrane system. Functionally, GTPase activator for the nuclear Ras-related regulatory proteins Rap1, Rsr1 and Ran in vitro, converting them to the putatively inactive GDP-bound state. Affects cell cycle progression. In Mus musculus (Mouse), this protein is Signal-induced proliferation-associated protein 1 (Sipa1).